Here is a 350-residue protein sequence, read N- to C-terminus: MSEMDKVQEKPSQTTKTEVQAKLPKVGVLLVNLGTPDGTSYGPMRRYLAEFLSDRRVIEWPRLIWYPILYGIVLNTRPKRSGKLYDRIWNREKNESPLRTYTRAQGEKLATALADYPNVVVDWAMRYGQPSIESVTDRLLQQGCERIVMFPLYPQYSATTTATVNDKFFEALMKKRFQPAVRIVPSYETEPVYIEALARSIEKHLETLSFKPEVVLASYHGIPKSYSDKGDPYRQQCLETSRLLQARLGLDDSQFRSTFQSRFGPEEWLQPYTDETVEELAKHGVKSMAVLNPGFVADCLETVDEIGNEAAEEFLENGGESFSHIPCLNDSEDGMKVIETLVRRELQGWV.

Fe cation-binding residues include histidine 220 and glutamate 301.

This sequence belongs to the ferrochelatase family.

Its subcellular location is the cytoplasm. It catalyses the reaction heme b + 2 H(+) = protoporphyrin IX + Fe(2+). Its pathway is porphyrin-containing compound metabolism; protoheme biosynthesis; protoheme from protoporphyrin-IX: step 1/1. In terms of biological role, catalyzes the ferrous insertion into protoporphyrin IX. The sequence is that of Ferrochelatase from Brucella anthropi (strain ATCC 49188 / DSM 6882 / CCUG 24695 / JCM 21032 / LMG 3331 / NBRC 15819 / NCTC 12168 / Alc 37) (Ochrobactrum anthropi).